Reading from the N-terminus, the 97-residue chain is Cobalt transport protein CbiN (97 aa).

Helical transmembrane passes span 6–26 and 68–88; these read VLMI…YSGL and SLLF…FFGY.

This sequence belongs to the CbiN family. Forms an energy-coupling factor (ECF) transporter complex composed of an ATP-binding protein (A component, CbiO), a transmembrane protein (T component, CbiQ) and 2 possible substrate-capture proteins (S components, CbiM and CbiN) of unknown stoichimetry.

It localises to the cell membrane. The protein operates within cofactor biosynthesis; adenosylcobalamin biosynthesis. Functionally, part of the energy-coupling factor (ECF) transporter complex CbiMNOQ involved in cobalt import. The chain is Cobalt transport protein CbiN from Methanococcus maripaludis (strain C6 / ATCC BAA-1332).